Consider the following 1012-residue polypeptide: Antigenic heat-stable 120 kDa protein (1012 aa).

2 disordered regions span residues 1-73 (DTSE…TSDP) and 348-396 (GQSK…PQSQ). The segment covering 12–27 (EYTEEQKQTLEQEQKE) has biased composition (basic and acidic residues). Over residues 47–61 (SASSAQSTPSMSALS) the composition is skewed to low complexity. Composition is skewed to polar residues over residues 62 to 73 (GNISPDSQTSDP), 348 to 373 (GQSK…QYKQ), and 380 to 396 (PTNQ…PQSQ).

It localises to the cytoplasm. The protein is Antigenic heat-stable 120 kDa protein (sca4) of Rickettsia slovaca.